A 648-amino-acid polypeptide reads, in one-letter code: MFALDSIVGKHINYALDKTQHLPNKINNSITNTEITLQDYQYFASRIFIGLKNLNSMLLFWDTGTGKTLTAVYIIKYIKELFPRWIILIFIKKSLYIDPWLNTISSYISDTSNIKFIYYDSTSSLDKKFNNIYRSIESSLNKKNRLLIIIDEVHKLISRSVKKDNNERNFTPIYRKLIKLANYENNKILCMSATPITNNIAEFNNLIGLLRPNVMNIKEEYINNGKLINFKEVRETLLGICSYKRLIEADSLTDTNYIDGYAKKSIFYHNIIMSDEQSKLYNMAERYDYKTELGGLKTMRRLISSFAFYDLKIKGDLDNVEYNEMIKRKLAEFSEFTKNINFSKAFINAFKNNEIKSKTDLLITDINNYNILYQYSCKYIEACRIILNSRGKVLLFEPLVNFEGISSLKYYFNCFNISYIEYSSKTIKMRDNDLNEYNNYENNDGNKIKVCIFSYAGSEGISFKCINDIIILDMPWNESELKQIIGRSIRLNSHEYLPINYRYVNVHFIISYSNNRKSVDKEMLDIIKNKQGKINVVFDLLKASSIETIHNMHKYIEPVDNEIIFEIIRKTRMKEMNISNVIINLKLYPITYCKDYDRATILKGFLNKDTNIIYDNDTPVAKLIVDNNNLPIFVIENDILIYITNDYY.

Residues 48–213 (FIGLKNLNSM…NNLIGLLRPN (166 aa)) enclose the Helicase ATP-binding domain. Residue 61–68 (WDTGTGKT) participates in ATP binding. Residues 151–154 (DEVH) carry the DEXH box motif. Residues 379 to 542 (YIEACRIILN…KINVVFDLLK (164 aa)) enclose the Helicase C-terminal domain. The binding to the cap-specific mRNA (nucleoside-2'-O-)-methyltransferase stretch occupies residues 468–534 (DIIILDMPWN…DIIKNKQGKI (67 aa)).

The protein belongs to the helicase family. NPH I subfamily. As to quaternary structure, monomer. Interacts (via C-terminus) with RAP94 (via N-terminus). Interacts with the cap-specific mRNA (nucleoside-2'-O-)-methyltransferase.

The protein resides in the virion. It catalyses the reaction a ribonucleoside 5'-triphosphate + H2O = a ribonucleoside 5'-diphosphate + phosphate + H(+). Its function is as follows. DNA-dependent ATPase required for providing the needed energy to achieve the termination of early transcripts. Acts in concert with the RAP94 subunit of the virion RNA polymerase and the capping enzyme/VTF to catalyze release of UUUUUNU-containing nascent RNA from the elongation complex. NPH-I must bind ssDNA in order to exhibit ATPase activity. The chain is Nucleoside triphosphatase I (NPH1) from Choristoneura fumiferana (Spruce budworm moth).